The chain runs to 259 residues: Ribonuclease PH (259 aa).

Residues Arg-88 and 126 to 128 each bind phosphate; that span reads GTR.

The protein belongs to the RNase PH family. Homohexameric ring arranged as a trimer of dimers.

The enzyme catalyses tRNA(n+1) + phosphate = tRNA(n) + a ribonucleoside 5'-diphosphate. Phosphorolytic 3'-5' exoribonuclease that plays an important role in tRNA 3'-end maturation. Removes nucleotide residues following the 3'-CCA terminus of tRNAs; can also add nucleotides to the ends of RNA molecules by using nucleoside diphosphates as substrates, but this may not be physiologically important. Probably plays a role in initiation of 16S rRNA degradation (leading to ribosome degradation) during starvation. The sequence is that of Ribonuclease PH from Mycobacterium bovis (strain BCG / Pasteur 1173P2).